The following is a 248-amino-acid chain: Triosephosphate isomerase (248 aa).

Substrate is bound by residues asparagine 11 and lysine 13. The active-site Electrophile is the histidine 95. Residue glutamate 165 is the Proton acceptor of the active site.

This sequence belongs to the triosephosphate isomerase family. Homodimer.

The protein localises to the cytoplasm. The enzyme catalyses D-glyceraldehyde 3-phosphate = dihydroxyacetone phosphate. It carries out the reaction dihydroxyacetone phosphate = methylglyoxal + phosphate. It functions in the pathway carbohydrate degradation; glycolysis; D-glyceraldehyde 3-phosphate from glycerone phosphate: step 1/1. It participates in carbohydrate biosynthesis; gluconeogenesis. In terms of biological role, triosephosphate isomerase is an extremely efficient metabolic enzyme that catalyzes the interconversion between dihydroxyacetone phosphate (DHAP) and D-glyceraldehyde-3-phosphate (G3P) in glycolysis and gluconeogenesis. Its function is as follows. It is also responsible for the non-negligible production of methylglyoxal a reactive cytotoxic side-product that modifies and can alter proteins, DNA and lipids. This chain is Triosephosphate isomerase (tpi1), found in Oryzias latipes (Japanese rice fish).